The sequence spans 148 residues: 3-hydroxyacyl-[acyl-carrier-protein] dehydratase FabZ (148 aa).

Histidine 50 is a catalytic residue.

The protein belongs to the thioester dehydratase family. FabZ subfamily.

It localises to the cytoplasm. The catalysed reaction is a (3R)-hydroxyacyl-[ACP] = a (2E)-enoyl-[ACP] + H2O. Involved in unsaturated fatty acids biosynthesis. Catalyzes the dehydration of short chain beta-hydroxyacyl-ACPs and long chain saturated and unsaturated beta-hydroxyacyl-ACPs. This is 3-hydroxyacyl-[acyl-carrier-protein] dehydratase FabZ from Lactobacillus helveticus (strain DPC 4571).